The primary structure comprises 216 residues: Ras-related protein RABA1b (216 aa).

20-27 contributes to the GTP binding site; that stretch reads GDSGVGKS. The Effector region signature appears at 42–50; it reads SKSTIGVEF. Residues 68–72, 126–129, and 156–157 each bind GTP; these read DTAGQ, NKSD, and SA. S-geranylgeranyl cysteine attachment occurs at residues cysteine 213 and cysteine 214.

It belongs to the small GTPase superfamily. Rab family.

It is found in the cell membrane. Its function is as follows. Intracellular vesicle trafficking and protein transport. The polypeptide is Ras-related protein RABA1b (RABA1B) (Arabidopsis thaliana (Mouse-ear cress)).